We begin with the raw amino-acid sequence, 887 residues long: DNA mismatch repair protein MutS (887 aa).

Gly-626 to Ser-633 is a binding site for ATP.

This sequence belongs to the DNA mismatch repair MutS family.

Functionally, this protein is involved in the repair of mismatches in DNA. It is possible that it carries out the mismatch recognition step. This protein has a weak ATPase activity. The polypeptide is DNA mismatch repair protein MutS (Methanococcoides burtonii (strain DSM 6242 / NBRC 107633 / OCM 468 / ACE-M)).